A 196-amino-acid chain; its full sequence is Hypoxanthine/guanine phosphoribosyltransferase (196 aa).

Belongs to the purine/pyrimidine phosphoribosyltransferase family. Archaeal HPRT subfamily. Homodimer.

The protein localises to the cytoplasm. The enzyme catalyses IMP + diphosphate = hypoxanthine + 5-phospho-alpha-D-ribose 1-diphosphate. The catalysed reaction is GMP + diphosphate = guanine + 5-phospho-alpha-D-ribose 1-diphosphate. It functions in the pathway purine metabolism; IMP biosynthesis via salvage pathway; IMP from hypoxanthine: step 1/1. Functionally, catalyzes a salvage reaction resulting in the formation of IMP that is energically less costly than de novo synthesis. The protein is Hypoxanthine/guanine phosphoribosyltransferase of Methanocaldococcus sp. (strain FS406-22).